The primary structure comprises 224 residues: UPF0758 protein BLi02933/BL00636 (224 aa).

Residues 102 to 224 (VIRFPEDAAN…FVSLKEKGYL (123 aa)) form the MPN domain. 3 residues coordinate Zn(2+): histidine 173, histidine 175, and aspartate 186. The JAMM motif signature appears at 173–186 (HNHPSGDPAPSRED).

It belongs to the UPF0758 family.

The protein is UPF0758 protein BLi02933/BL00636 of Bacillus licheniformis (strain ATCC 14580 / DSM 13 / JCM 2505 / CCUG 7422 / NBRC 12200 / NCIMB 9375 / NCTC 10341 / NRRL NRS-1264 / Gibson 46).